A 501-amino-acid polypeptide reads, in one-letter code: Acetylcholine receptor subunit beta (501 aa).

The first 23 residues, 1-23 (MALGALLLILGILGTPLAPGARG), serve as a signal peptide directing secretion. Topologically, residues 24–244 (SEAEGQLLKK…VIFYLIIRRK (221 aa)) are extracellular. Cys151 and Cys165 are disulfide-bonded. N-linked (GlcNAc...) asparagine glycosylation occurs at Asn164. A run of 3 helical transmembrane segments spans residues 245-269 (PLFY…VFYL), 277-295 (MGLS…LLLA), and 311-332 (YLMF…VLNL). Topologically, residues 333–469 (HHRSPHTHQM…WQFVAMVVDR (137 aa)) are cytoplasmic. The disordered stretch occupies residues 362–381 (RPKPERDQLPEPHHSFSPRS). Positions 363–375 (PKPERDQLPEPHH) are enriched in basic and acidic residues. Tyr390 carries the phosphotyrosine; by Tyr-kinases modification. The helical transmembrane segment at 470–488 (LFLWTFIVFTSVGTLVIFL) threads the bilayer.

The protein belongs to the ligand-gated ion channel (TC 1.A.9) family. Acetylcholine receptor (TC 1.A.9.1) subfamily. Beta-1/CHRNB1 sub-subfamily. Pentamer of two alpha chains, and one each of the beta, delta, and gamma (in immature muscle) or epsilon (in mature muscle) chains. The muscle heteropentamer composed of alpha-1, beta-1, delta, epsilon subunits interacts with the alpha-conotoxin ImII.

Its subcellular location is the postsynaptic cell membrane. It localises to the cell membrane. It carries out the reaction K(+)(in) = K(+)(out). The enzyme catalyses Na(+)(in) = Na(+)(out). Functionally, after binding acetylcholine, the AChR responds by an extensive change in conformation that affects all subunits and leads to opening of an ion-conducting channel across the plasma membrane. The chain is Acetylcholine receptor subunit beta (Chrnb1) from Rattus norvegicus (Rat).